A 423-amino-acid chain; its full sequence is Galactosylceramide sulfotransferase (423 aa).

At 1-14 the chain is on the cytoplasmic side; it reads MLPPQKKPWESMAK. The chain crosses the membrane as a helical; Signal-anchor for type II membrane protein span at residues 15-35; sequence GLVLGALFTSFLLLVYSYAVP. The Lumenal segment spans residues 36-423; that stretch reads PLHAGLASTT…WKFIRDFLRW (388 aa). N-linked (GlcNAc...) asparagine glycans are attached at residues N66 and N312.

This sequence belongs to the galactose-3-O-sulfotransferase family. As to expression, expressed in kidney proximal tubule, gastric mucosa and adenocarcinoma. Highly expressed in renal cell carcinoma cell lines.

The protein localises to the golgi apparatus membrane. It carries out the reaction a beta-D-galactosyl-(1&lt;-&gt;1')-N-acylsphing-4-enine + 3'-phosphoadenylyl sulfate = an N-acyl-1-beta-D-(3-O-sulfo)-galactosyl-sphing-4-enine + adenosine 3',5'-bisphosphate + H(+). The enzyme catalyses a 1-O-alkyl-2-acyl-3-O-(beta-D-galactosyl)-sn-glycerol + 3'-phosphoadenylyl sulfate = a 1-O-alkyl-2-acyl-3-(beta-D-3-sulfogalactosyl)-sn-glycerol + adenosine 3',5'-bisphosphate + H(+). The catalysed reaction is a beta-D-Gal-(1&lt;-&gt;1')-ceramide + 3'-phosphoadenylyl sulfate = 1-(3-O-sulfo-beta-D-galactosyl)-ceramide + adenosine 3',5'-bisphosphate + H(+). It catalyses the reaction a 1,2-diacyl-3-O-(beta-D-galactosyl)-sn-glycerol + 3'-phosphoadenylyl sulfate = 1,2-diacyl-3-(3-O-sulfo-beta-D-galactosyl)-sn-glycerol + adenosine 3',5'-bisphosphate + H(+). It carries out the reaction a beta-D-Gal-(1-&gt;4)-beta-D-Glc-(1&lt;-&gt;1)-Cer(d18:1(4E)) + 3'-phosphoadenylyl sulfate = beta-D-3-sulfogalactosyl-(1-&gt;4)-beta-D-glucosyl-(1&lt;-&gt;1')-N-acylsphing-4-enine + adenosine 3',5'-bisphosphate + H(+). It functions in the pathway lipid metabolism; sphingolipid metabolism. Its function is as follows. Catalyzes the transfer of a sulfate group to position 3 of non-reducing beta-galactosyl residues in glycerolipids and sphingolipids, therefore participates in the biosynthesis of sulfoglycolipids. Catalyzes the synthesis of galactosylceramide sulfate (sulfatide), a major lipid component of the myelin sheath and of monogalactosylalkylacylglycerol sulfate (seminolipid), present in spermatocytes. Seems to prefer beta-glycosides at the non-reducing termini of sugar chains attached to a lipid moiety. Also acts on lactosylceramide, galactosyl 1-alkyl-2-sn-glycerol and galactosyl diacylglycerol (in vitro). In Homo sapiens (Human), this protein is Galactosylceramide sulfotransferase.